A 113-amino-acid polypeptide reads, in one-letter code: Putative pterin-4-alpha-carbinolamine dehydratase (113 aa).

Belongs to the pterin-4-alpha-carbinolamine dehydratase family.

The enzyme catalyses (4aS,6R)-4a-hydroxy-L-erythro-5,6,7,8-tetrahydrobiopterin = (6R)-L-erythro-6,7-dihydrobiopterin + H2O. This chain is Putative pterin-4-alpha-carbinolamine dehydratase, found in Saccharophagus degradans (strain 2-40 / ATCC 43961 / DSM 17024).